The primary structure comprises 122 residues: Large ribosomal subunit protein uL14 (122 aa).

This sequence belongs to the universal ribosomal protein uL14 family. As to quaternary structure, part of the 50S ribosomal subunit. Forms a cluster with proteins L3 and L19. In the 70S ribosome, L14 and L19 interact and together make contacts with the 16S rRNA in bridges B5 and B8.

Binds to 23S rRNA. Forms part of two intersubunit bridges in the 70S ribosome. The polypeptide is Large ribosomal subunit protein uL14 (Carsonella ruddii (strain PV)).